The primary structure comprises 69 residues: MADDEVVDPKKYLEESCKPKCVKPLLEYQACVKRIQGDDSGHKHCTGQYFDYWQCIDKCVAPKLFAKLK.

Intrachain disulfides connect cysteine 17–cysteine 59 and cysteine 31–cysteine 45.

Belongs to the UQCRH/QCR6 family. Component of the ubiquinol-cytochrome c oxidoreductase (cytochrome b-c1 complex, complex III, CIII), a multisubunit enzyme composed of 10 subunits. The complex is composed of 3 respiratory subunits cytochrome b (MT-CYB), cytochrome c1 (CYC1-1 or CYC1-2) and Rieske protein (UCR1-1 or UCR1-2), 2 core protein subunits MPPalpha1 (or MPPalpha2) and MPPB, and 5 low-molecular weight protein subunits QCR7-1 (or QCR7-2), UCRQ-1 (or UCRQ-2), QCR9, UCRY and probably QCR6-1 (or QCR6-2). The complex exists as an obligatory dimer and forms supercomplexes (SCs) in the inner mitochondrial membrane with NADH-ubiquinone oxidoreductase (complex I, CI), resulting in different assemblies (supercomplexes SCI(1)III(2) and SCI(2)III(4)).

Its subcellular location is the mitochondrion inner membrane. Functionally, component of the ubiquinol-cytochrome c oxidoreductase, a multisubunit transmembrane complex that is part of the mitochondrial electron transport chain which drives oxidative phosphorylation. The respiratory chain contains 3 multisubunit complexes succinate dehydrogenase (complex II, CII), ubiquinol-cytochrome c oxidoreductase (cytochrome b-c1 complex, complex III, CIII) and cytochrome c oxidase (complex IV, CIV), that cooperate to transfer electrons derived from NADH and succinate to molecular oxygen, creating an electrochemical gradient over the inner membrane that drives transmembrane transport and the ATP synthase. The cytochrome b-c1 complex catalyzes electron transfer from ubiquinol to cytochrome c, linking this redox reaction to translocation of protons across the mitochondrial inner membrane, with protons being carried across the membrane as hydrogens on the quinol. In the process called Q cycle, 2 protons are consumed from the matrix, 4 protons are released into the intermembrane space and 2 electrons are passed to cytochrome c. This Arabidopsis thaliana (Mouse-ear cress) protein is Cytochrome b-c1 complex subunit 6-1, mitochondrial (QCR6-1).